Here is a 162-residue protein sequence, read N- to C-terminus: Transcription antitermination protein RfaH (162 aa).

This sequence belongs to the RfaH family. Interacts with both the nontemplate DNA and the RNA polymerase (RNAP). Monomer in solution.

In terms of biological role, enhances distal genes transcription elongation in a specialized subset of operons that encode extracytoplasmic components. RfaH is recruited into a multi-component RNA polymerase complex by the ops element, which is a short conserved DNA sequence located downstream of the main promoter of these operons. Once bound, RfaH suppresses pausing and inhibits Rho-dependent and intrinsic termination at a subset of sites. Termination signals are bypassed, which allows complete synthesis of long RNA chains. Enhances expression of several operons involved in synthesis of lipopolysaccharides, exopolysaccharides, hemolysin, and sex factor. Also negatively controls expression and surface presentation of AG43 and possibly another AG43-independent factor that mediates cell-cell interactions and biofilm formation. The polypeptide is Transcription antitermination protein RfaH (Escherichia coli (strain K12)).